Here is a 777-residue protein sequence, read N- to C-terminus: MEPKEATGKENMVTKKKNLAFLRSRLYMLERRKTDTVVESSVSGDHSGTLRRSQSDRTEYNQKLQEKMTPQGECSVAETLTPEEEHHMKRMMAKREKIIKELIQTEKDYLNDLELCVREVVQPLRNKKTDRLDVDSLFSNIESVHQISAKLLSLLEEATTDVEPAMQVIGEVFLQIKGPLEDIYKIYCYHHDEAHSILESYEKEEELKEHLSHCIQSLKKIYMQEGKPNLLDMGSLMIKPIQRVMKYPLLLCELRNSTPPSHPDYRALDDAFAAVKDINVNINELKRRKDLVLKYKKNDEDESLKDKLSKLNIHSISKKSKRVTNHLKILTRGESQVKDNTFNREEKLFRALEKTVRLCVKNISLCLQHIQDAMPLALQSVMDLQEISYNKDDEMDYSETLSNALNSCHDFASHLQRLILTPLSALLSLFPGPHKLIQKRYDKLLDCNSYLQRSTGEESDLAKKEYEALNAQLVEELQAFNQAARKILLNCLCSFITLLRDLMLVAQQAYSTLVPMPLLVSSISEIQNQVLEEIQNLNCVKENSATFIERKLSFEKKKPVQILPEMPHQTDIHRSKLLSTYSAEELYQAKRKCNATQEYDINLLEGDLVAVIEQKDPLGSTSRWLVDTGNVKGYVYSSFLKPYNPAKMQKVDAENRFCDDDFENISLFVSSRPASDSVTGTSESSIGDSSSSLSGTCGKFETNGTDVDSFQEVDEQIFYAVHAFQARSDHELSLQEYQRVHILRFCDLSGNKEWWLAEAQGQKGYVPANYLGKMTYA.

A Phosphothreonine modification is found at Thr34. The tract at residues 35–72 (DTVVESSVSGDHSGTLRRSQSDRTEYNQKLQEKMTPQG) is disordered. The span at 37-52 (VVESSVSGDHSGTLRR) shows a compositional bias: polar residues. Residues 53–66 (SQSDRTEYNQKLQE) are compositionally biased toward basic and acidic residues. A DH domain is found at 94 to 285 (KREKIIKELI…KDINVNINEL (192 aa)). In terms of domain architecture, BAR spans 327–536 (LKILTRGESQ…QNQVLEEIQN (210 aa)). Positions 582 to 645 (SAEELYQAKR…YSSFLKPYNP (64 aa)) constitute an SH3 1 domain. Residues 673–694 (PASDSVTGTSESSIGDSSSSLS) form a disordered region. Residues 679–694 (TGTSESSIGDSSSSLS) are compositionally biased toward low complexity. An SH3 2 domain is found at 713 to 776 (VDEQIFYAVH…PANYLGKMTY (64 aa)).

Its function is as follows. May act as a guanine-nucleotide releasing factor. In Homo sapiens (Human), this protein is Rho guanine nucleotide exchange factor 38 (ARHGEF38).